A 181-amino-acid chain; its full sequence is Transcription termination/antitermination protein NusG (181 aa).

A KOW domain is found at 130-161; it reads PGELVRVSDGPFADFNGVVEEVDYEKSRLKVS.

This sequence belongs to the NusG family. Monomer. Interacts with the transcription termination factor Rho and with RNA polymerase.

Its function is as follows. Participates in transcription elongation, termination and antitermination. In the absence of Rho, increases the rate of transcription elongation by the RNA polymerase (RNAP), probably by partially suppressing pausing. In the presence of Rho, modulates most Rho-dependent termination events by interacting with the RNAP to render the complex more susceptible to the termination activity of Rho. May be required to overcome a kinetic limitation of Rho to function at certain terminators. Also involved in ribosomal RNA transcriptional antitermination. The protein is Transcription termination/antitermination protein NusG of Yersinia pestis.